A 468-amino-acid polypeptide reads, in one-letter code: Glutathione reductase (468 aa).

The FAD site is built by Ser-17 and Gly-18. Ser-17 contributes to the glutathione binding site. Arg-24 is a glutathione binding site. FAD is bound by residues Glu-38, Thr-45, Cys-46, and Lys-54. Residues Cys-46 and Cys-51 are joined by a disulfide bond. A glutathione-binding site is contributed by Tyr-103. Ala-119 contacts FAD. Ala-185, Ile-188, Glu-191, Arg-208, Arg-214, and Gly-276 together coordinate NADP(+). FAD is bound at residue Asp-317. An NADP(+)-binding site is contributed by Glu-323. Thr-325 provides a ligand contact to FAD. Position 333 (Arg-333) interacts with glutathione. Residue Val-358 coordinates NADP(+). Lys-410 provides a ligand contact to glutathione. His-457 is an FAD binding site. The Proton acceptor role is filled by His-457.

The protein belongs to the class-I pyridine nucleotide-disulfide oxidoreductase family. In terms of assembly, homodimer. It depends on FAD as a cofactor.

It localises to the cytoplasm. Its subcellular location is the mitochondrion. The enzyme catalyses 2 glutathione + NADP(+) = glutathione disulfide + NADPH + H(+). Its function is as follows. Catalyzes the reduction of glutathione disulfide (GSSG) to reduced glutathione (GSH). Constitutes the major mechanism to maintain a high GSH:GSSG ratio in the cytosol. The protein is Glutathione reductase (gtr-1) of Neurospora crassa (strain ATCC 24698 / 74-OR23-1A / CBS 708.71 / DSM 1257 / FGSC 987).